The primary structure comprises 253 residues: Probable transcriptional regulatory protein RC0681 (253 aa).

Residues 1–21 (MAGHSKFKNIQHRKGAQDKKR) are disordered.

The protein belongs to the TACO1 family.

It localises to the cytoplasm. The protein is Probable transcriptional regulatory protein RC0681 of Rickettsia conorii (strain ATCC VR-613 / Malish 7).